Consider the following 296-residue polypeptide: Diaminopimelate epimerase (296 aa).

Substrate contacts are provided by N17, Q49, and N69. The active-site Proton donor is the C78. Substrate is bound by residues 79 to 80 (GN), N171, N205, and 223 to 224 (ER). Residue C232 is the Proton acceptor of the active site. 233 to 234 (GT) provides a ligand contact to substrate.

The protein belongs to the diaminopimelate epimerase family. In terms of assembly, homodimer.

It is found in the cytoplasm. It catalyses the reaction (2S,6S)-2,6-diaminopimelate = meso-2,6-diaminopimelate. It functions in the pathway amino-acid biosynthesis; L-lysine biosynthesis via DAP pathway; DL-2,6-diaminopimelate from LL-2,6-diaminopimelate: step 1/1. Catalyzes the stereoinversion of LL-2,6-diaminopimelate (L,L-DAP) to meso-diaminopimelate (meso-DAP), a precursor of L-lysine and an essential component of the bacterial peptidoglycan. This is Diaminopimelate epimerase from Methylorubrum extorquens (strain CM4 / NCIMB 13688) (Methylobacterium extorquens).